Consider the following 264-residue polypeptide: Thiazole synthase (264 aa).

K106 acts as the Schiff-base intermediate with DXP in catalysis. 1-deoxy-D-xylulose 5-phosphate-binding positions include G167, 193-194, and 215-216; these read AG and NT.

Belongs to the ThiG family. Homotetramer. Forms heterodimers with either ThiH or ThiS.

The protein localises to the cytoplasm. The enzyme catalyses [ThiS sulfur-carrier protein]-C-terminal-Gly-aminoethanethioate + 2-iminoacetate + 1-deoxy-D-xylulose 5-phosphate = [ThiS sulfur-carrier protein]-C-terminal Gly-Gly + 2-[(2R,5Z)-2-carboxy-4-methylthiazol-5(2H)-ylidene]ethyl phosphate + 2 H2O + H(+). It participates in cofactor biosynthesis; thiamine diphosphate biosynthesis. In terms of biological role, catalyzes the rearrangement of 1-deoxy-D-xylulose 5-phosphate (DXP) to produce the thiazole phosphate moiety of thiamine. Sulfur is provided by the thiocarboxylate moiety of the carrier protein ThiS. In vitro, sulfur can be provided by H(2)S. The protein is Thiazole synthase of Xylella fastidiosa (strain 9a5c).